We begin with the raw amino-acid sequence, 78 residues long: Small ribosomal subunit protein bS18 (78 aa).

It belongs to the bacterial ribosomal protein bS18 family. Part of the 30S ribosomal subunit. Forms a tight heterodimer with protein bS6.

In terms of biological role, binds as a heterodimer with protein bS6 to the central domain of the 16S rRNA, where it helps stabilize the platform of the 30S subunit. The polypeptide is Small ribosomal subunit protein bS18 (Thermobifida fusca (strain YX)).